A 501-amino-acid polypeptide reads, in one-letter code: Alveolysin (501 aa).

Residues 1–32 (MKKKSNHLKGRKVLVSLLVSLQVFAFASISSA) form the signal peptide. Transmembrane regions (beta stranded) follow at residues 191–204 (QNQISSALNVNAKV), 211–220 (IDFNAVANGE), 289–298 (SNDVQTAFKL), and 306–318 (QASGQYKDIYENS). Residues 460–470 (ECTGLAWEWWR) carry the Conserved undecapeptide motif. The short motif at 492–493 (TL) is the Cholesterol binding element.

It belongs to the cholesterol-dependent cytolysin family. Homooligomeric pore complex of 35 to 50 subunits; when inserted in the host membrane.

Its subcellular location is the secreted. The protein localises to the host cell membrane. With respect to regulation, inhibited by cholesterol and thiol reagents. Its function is as follows. A cholesterol-dependent toxin that causes cytolysis by forming pores in cholesterol containing host membranes. After binding to target membranes, the protein undergoes a major conformation change, leading to its insertion in the host membrane and formation of an oligomeric pore complex. Cholesterol is required for binding to host cell membranes, membrane insertion and pore formation; cholesterol binding is mediated by a Thr-Leu pair in the C-terminus. Can be reversibly inactivated by oxidation. The protein is Alveolysin (alv) of Paenibacillus alvei (Bacillus alvei).